The sequence spans 81 residues: MRKLALVPIQFYRYAMSPLMASHCRFYPSCSCYAYEAIENHGLLRGGWLSIRRLGRCHPWNPGGYDPVPAVPTSRSSSMAE.

The protein belongs to the UPF0161 family.

Its subcellular location is the cell inner membrane. In terms of biological role, could be involved in insertion of integral membrane proteins into the membrane. The sequence is that of Putative membrane protein insertion efficiency factor from Pseudomonas savastanoi pv. phaseolicola (strain 1448A / Race 6) (Pseudomonas syringae pv. phaseolicola (strain 1448A / Race 6)).